The chain runs to 561 residues: uncharacterized protein (561 aa).

Transmembrane regions (helical) follow at residues 29 to 49 (FIFNVGSLTPTTAVLGVKKII) and 80 to 100 (FLFHTVGFFPIYTSTIGAVVI).

It localises to the cell membrane. This is an uncharacterized protein from Mycoplasma pneumoniae (strain ATCC 29342 / M129 / Subtype 1) (Mycoplasmoides pneumoniae).